The primary structure comprises 863 residues: Potassium/sodium hyperpolarization-activated cyclic nucleotide-gated channel 2 (863 aa).

The segment covering 1 to 10 (MDARGGGGRP) has biased composition (gly residues). The segment at 1-131 (MDARGGGGRP…AGPAGEPRGS (131 aa)) is disordered. Topologically, residues 1–188 (MDARGGGGRP…PYSDFRFYWD (188 aa)) are cytoplasmic. Over residues 17 to 47 (TPAPGPPPPPPPPAPPQPQPPPAPPPNPTTP) the composition is skewed to pro residues. Over residues 106–128 (GAASGPAAAEEAGSEEAGPAGEP) the composition is skewed to low complexity. Phosphoserine occurs at positions 119 and 134. The tract at residues 131-182 (SQASFLQRQFGALLQPGVNKFSLRMFGSQKAVEREQERVKSAGAWIIHPYSD) is involved in subunit assembly. The chain crosses the membrane as a helical span at residues 189 to 209 (FTMLLFMVGNLIIIPVGITFF). At 210-213 (KDET) the chain is on the extracellular side. Residues 214–234 (TAPWIVFNVVSDTFFLMDLVL) form a helical membrane-spanning segment. The Cytoplasmic segment spans residues 235 to 261 (NFRTGIVIEDNTEIILDPEKIKKKYLR). The helical transmembrane segment at 262–282 (TWFVVDFVSSIPVDYIFLIVE) threads the bilayer. The Extracellular portion of the chain corresponds to 283–290 (KGIDSEVY). A helical; Voltage-sensor membrane pass occupies residues 291 to 311 (KTARALRIVRFTKILSLLRLL). The Cytoplasmic portion of the chain corresponds to 312–342 (RLSRLIRYIHQWEEIFHMTYDLASAVMRICN). A helical transmembrane segment spans residues 343–363 (LISMMLLLCHWDGCLQFLVPM). The Extracellular segment spans residues 364–386 (LQDFPSDCWVSINNMVNHSWSEL). N-linked (GlcNAc...) asparagine glycosylation occurs at Asn-380. The pore-forming intramembrane region spans 387 to 408 (YSFALFKAMSHMLCIGYGRQAP). The Extracellular portion of the chain corresponds to 409-413 (ESMTD). The chain crosses the membrane as a helical span at residues 414–434 (IWLTMLSMIVGATCYAMFIGH). Topologically, residues 435–863 (ATALIQSLDS…SARSRLSSNL (429 aa)) are cytoplasmic. 3',5'-cyclic AMP-binding residues include Gly-581, Glu-582, Cys-584, Arg-591, Thr-592, and Arg-632. A Phosphoserine; by PKG/PRKG2 modification is found at Ser-641. Ser-726 carries the post-translational modification Phosphoserine. Arg-728 bears the Omega-N-methylarginine mark. Residues 730-863 (VRRAPPGPLP…SARSRLSSNL (134 aa)) form a disordered region. Over residues 734–755 (PPGPLPPAASPGPPAASPPAAP) the composition is skewed to pro residues. Phosphoserine is present on residues Ser-743, Ser-750, and Ser-757. Composition is skewed to low complexity over residues 756–765 (SSPRAPRTSP) and 778–834 (PALP…AAPS). Phosphoserine occurs at positions 840, 842, and 847.

This sequence belongs to the potassium channel HCN family. Homotetramer. The channel is composed of a homo- or heterotetrameric complex of pore-forming subunits. Heterotetramer with HCN1. Forms an obligate 4:4 complex with accessory subunit PEX5L. Interacts with KCNE2. In terms of processing, phosphorylation at Ser-641 by PRKG2 shifts the voltage-dependence to more negative voltages, hence counteracting the stimulatory effect of cGMP on gating. N-glycosylated; required for cell surface trafficking of HCN2. Post-translationally, S-palmitoylated. As to expression, highly expressed in neonatal and adult ventricle and in brain. Highly expressed in the pyramidal layer in hippocampus, in anterior dorsal nucleus in thalamus, in the mammillary nucleus in hypothalamus, in red nucleus, in trigeminal mesencephalic, spinal and principal nuclei, in cochlear and trapezoid nuclei and in the dorsal tegemental nucleus.

It localises to the cell membrane. The enzyme catalyses Na(+)(in) = Na(+)(out). It carries out the reaction K(+)(in) = K(+)(out). It catalyses the reaction NH4(+)(in) = NH4(+)(out). With respect to regulation, activated by cAMP, and at 10-100 times higher concentrations, also by cGMP. cAMP binding causes a conformation change that leads to the assembly of an active tetramer and channel opening. In the absence of cAMP, the C-terminal region is thought to exert a tonic inhibition on the pore when HCN2 is in a non-tetrameric form. Channel activity is modulated by intracellular chloride ions and pH; acidic pH shifts the activation to more negative voltages. Phosphatidylinositol-4,5- bisphosphate (PIP(2)) acts as a ligand that allosterically opens HCN2 by shifting voltage-dependent channel activation toward depolarized potentials. Inhibited by extracellular cesium ions. Its function is as follows. Hyperpolarization-activated ion channel exhibiting weak selectivity for potassium over sodium ions. Contributes to the native pacemaker currents in heart (If) and in neurons (Ih). Can also transport ammonium in the distal nephron. Involved in the initiation of neuropathic pain in sensory neurons. Produces a large instantaneous current. The polypeptide is Potassium/sodium hyperpolarization-activated cyclic nucleotide-gated channel 2 (Hcn2) (Rattus norvegicus (Rat)).